Here is a 227-residue protein sequence, read N- to C-terminus: Phosphoglycolate phosphatase (227 aa).

Asp-9 (nucleophile) is an active-site residue. Residues Asp-9, Asp-11, and Asp-171 each contribute to the Mg(2+) site.

Belongs to the HAD-like hydrolase superfamily. CbbY/CbbZ/Gph/YieH family. It depends on Mg(2+) as a cofactor.

The enzyme catalyses 2-phosphoglycolate + H2O = glycolate + phosphate. Its pathway is organic acid metabolism; glycolate biosynthesis; glycolate from 2-phosphoglycolate: step 1/1. Its function is as follows. Specifically catalyzes the dephosphorylation of 2-phosphoglycolate. Is involved in the dissimilation of the intracellular 2-phosphoglycolate formed during the DNA repair of 3'-phosphoglycolate ends, a major class of DNA lesions induced by oxidative stress. The polypeptide is Phosphoglycolate phosphatase (Mesorhizobium japonicum (strain LMG 29417 / CECT 9101 / MAFF 303099) (Mesorhizobium loti (strain MAFF 303099))).